We begin with the raw amino-acid sequence, 444 residues long: Structure-specific endonuclease subunit SLX1 (444 aa).

One can recognise a GIY-YIG domain in the interval 23 to 105 (AFYCCYLLRS…QNTKVSRHAD (83 aa)). The SLX1-type zinc-finger motif lies at 240-295 (CGVCKQRLILQHDIIAVCSHSSCHCAAHLSCLSSHFLKDKDSDSELIPREGTCPAC). Disordered regions lie at residues 323–355 (RRRR…DALQ) and 386–444 (AHRP…EVIE).

Belongs to the SLX1 family. Forms a heterodimer with SLX4. A divalent metal cation serves as cofactor.

It is found in the nucleus. Functionally, catalytic subunit of the SLX1-SLX4 structure-specific endonuclease that resolves DNA secondary structures generated during DNA repair and recombination. Has endonuclease activity towards branched DNA substrates, introducing single-strand cuts in duplex DNA close to junctions with ss-DNA. The polypeptide is Structure-specific endonuclease subunit SLX1 (Paracoccidioides brasiliensis (strain Pb18)).